Consider the following 310-residue polypeptide: Signal peptidase I (310 aa).

Residues 5-25 form a helical membrane-spanning segment; the sequence is LSSFLLASSLITGTLWIINKI. Over 26 to 57 the chain is Cytoplasmic; the sequence is LSHNLLDSKIPFNIKKSKIYYKSKQVVQTFAS. The chain crosses the membrane as a helical span at residues 58-78; that stretch reads FFPILIIVFIIRTFICEPFQI. The Extracellular portion of the chain corresponds to 79–310; the sequence is PSESMMPTLL…IQFDRIGNIY (232 aa). Catalysis depends on residues Ser82 and Lys137.

It belongs to the peptidase S26 family.

The protein localises to the cell membrane. The catalysed reaction is Cleavage of hydrophobic, N-terminal signal or leader sequences from secreted and periplasmic proteins.. In Buchnera aphidicola subsp. Baizongia pistaciae (strain Bp), this protein is Signal peptidase I (lepB).